A 422-amino-acid polypeptide reads, in one-letter code: GTPase Obg (422 aa).

The Obg domain occupies 2–157 (AKFIDEIKLT…YLAHIVLKVM (156 aa)). In terms of domain architecture, OBG-type G spans 158–325 (SDVGIIGKPS…LKGKIWKILE (168 aa)). GTP is bound by residues 164–171 (GKPSAGKS), 189–193 (FTTLV), 210–213 (DLPG), 279–282 (NKSD), and 306–308 (SAI). Positions 171 and 191 each coordinate Mg(2+). The OCT domain maps to 334–420 (EEEETEENVE…ILDYEFEWDG (87 aa)).

It belongs to the TRAFAC class OBG-HflX-like GTPase superfamily. OBG GTPase family. Monomer. Mg(2+) serves as cofactor.

It is found in the cytoplasm. Functionally, an essential GTPase which binds GTP, GDP and possibly (p)ppGpp with moderate affinity, with high nucleotide exchange rates and a fairly low GTP hydrolysis rate. Plays a role in control of the cell cycle, stress response, ribosome biogenesis and in those bacteria that undergo differentiation, in morphogenesis control. The protein is GTPase Obg of Mycoplasmopsis agalactiae (strain NCTC 10123 / CIP 59.7 / PG2) (Mycoplasma agalactiae).